We begin with the raw amino-acid sequence, 455 residues long: Pentatricopeptide repeat-containing protein At3g26630, chloroplastic (455 aa).

The N-terminal 19 residues, 1-19 (MAAPSPSSPPNLLSPPPFR), are a transit peptide targeting the chloroplast. 11 PPR repeats span residues 51–81 (DQLL…LQSP), 82–117 (STFT…QSQF), 118–152 (DKFT…GFFN), 153–187 (DVFF…SIVS), 188–214 (WTTM…MPMR), 215–249 (NVVS…DVKP), 250–284 (NEFT…GFVL), 285–315 (DCFL…MQGK), 316–350 (SLAT…ASVE), 352–387 (DAIT…GISP), and 388–418 (IREH…MDSD).

The protein belongs to the PPR family. PCMP-A subfamily.

Its subcellular location is the plastid. It localises to the chloroplast. This is Pentatricopeptide repeat-containing protein At3g26630, chloroplastic (PCMP-A6) from Arabidopsis thaliana (Mouse-ear cress).